A 191-amino-acid chain; its full sequence is MDVILLERINKLGQMGETVKVRDGYARNFLLPQGKALRANAANKTRFETERATLEARNLERKSEAQTVAEALAGKSFIVVRSAGETGQLYGSVAARDVVEILGAEGFNIGRNQVELNTPIKTIGLHNVTLHLHAEVELQVELNVARSAEEAERQSKGESLTSADAIYGVDEDALRPEDFFDPEADGNEDDE.

A disordered region spans residues 149-191 (EEAERQSKGESLTSADAIYGVDEDALRPEDFFDPEADGNEDDE). A compositionally biased stretch (acidic residues) spans 179–191 (FFDPEADGNEDDE).

This sequence belongs to the bacterial ribosomal protein bL9 family.

Its function is as follows. Binds to the 23S rRNA. This chain is Large ribosomal subunit protein bL9 (rplI), found in Agrobacterium fabrum (strain C58 / ATCC 33970) (Agrobacterium tumefaciens (strain C58)).